Consider the following 325-residue polypeptide: Eukaryotic translation initiation factor 3 subunit I (325 aa).

WD repeat units lie at residues 8–47 (GHERSITQIKYNRDGDLLFTVAKDPVVNVWYSVNGERLGT), 50–89 (GHTGAVWCVDVDWDTRHVLSGSADNSCRLWDCETGKQLAL), 144–183 (CSESKITSAVWGPLGENIIAGHENGELNQYSAKSGEIVNS), 186–225 (EHSKQINDIQTSRDMTMFVTASKDCTSKLFDSTSLEHQKT), and 283–324 (GHFG…FEFE).

Belongs to the eIF-3 subunit I family. In terms of assembly, component of the eukaryotic translation initiation factor 3 (eIF-3) complex, which is composed of 13 subunits: eif3a, eif3b, eif3c, eif3d, eif3e, eif3f, eif3g, eif3h, eif3i, eif3j, eif3k, eif3l and eif3m.

Its subcellular location is the cytoplasm. Its function is as follows. Component of the eukaryotic translation initiation factor 3 (eIF-3) complex, which is involved in protein synthesis of a specialized repertoire of mRNAs and, together with other initiation factors, stimulates binding of mRNA and methionyl-tRNAi to the 40S ribosome. The eIF-3 complex specifically targets and initiates translation of a subset of mRNAs involved in cell proliferation. This is Eukaryotic translation initiation factor 3 subunit I (eif3i) from Xenopus tropicalis (Western clawed frog).